We begin with the raw amino-acid sequence, 256 residues long: ATP synthase subunit a (256 aa).

Positions 1–7 are cleaved as a propeptide — removed in mature form; sequence MLNLFIT. 6 consecutive transmembrane segments (helical) span residues 33–53, 92–112, 122–142, 148–168, 188–208, and 209–229; these read FTTF…LNLL, YFPL…ISMI, LIFI…IGLT, FFSL…LVLI, VLSG…LMSM, and SIIT…IVVL.

The protein belongs to the ATPase A chain family. As to quaternary structure, F-type ATPases have 2 components, CF(1) - the catalytic core - and CF(0) - the membrane proton channel. CF(1) has five subunits: alpha(3), beta(3), gamma(1), delta(1), epsilon(1). CF(0) has three main subunits: a, b and c.

The protein localises to the mitochondrion inner membrane. Functionally, mitochondrial membrane ATP synthase (F(1)F(0) ATP synthase or Complex V) produces ATP from ADP in the presence of a proton gradient across the membrane which is generated by electron transport complexes of the respiratory chain. F-type ATPases consist of two structural domains, F(1) - containing the extramembraneous catalytic core and F(0) - containing the membrane proton channel, linked together by a central stalk and a peripheral stalk. During catalysis, ATP synthesis in the catalytic domain of F(1) is coupled via a rotary mechanism of the central stalk subunits to proton translocation. Key component of the proton channel; it may play a direct role in the translocation of protons across the membrane. The polypeptide is ATP synthase subunit a (ATP6) (Kluyveromyces lactis (strain ATCC 8585 / CBS 2359 / DSM 70799 / NBRC 1267 / NRRL Y-1140 / WM37) (Yeast)).